The following is a 186-amino-acid chain: Elongation factor P (186 aa).

The protein belongs to the elongation factor P family.

The protein localises to the cytoplasm. Its pathway is protein biosynthesis; polypeptide chain elongation. Involved in peptide bond synthesis. Stimulates efficient translation and peptide-bond synthesis on native or reconstituted 70S ribosomes in vitro. Probably functions indirectly by altering the affinity of the ribosome for aminoacyl-tRNA, thus increasing their reactivity as acceptors for peptidyl transferase. The sequence is that of Elongation factor P from Streptococcus mutans serotype c (strain ATCC 700610 / UA159).